The sequence spans 307 residues: Mycothiol acetyltransferase (307 aa).

2 N-acetyltransferase domains span residues 12-152 (TRTD…APIP) and 160-307 (VTLR…YQRS). E43 contributes to the 1D-myo-inositol 2-(L-cysteinylamino)-2-deoxy-alpha-D-glucopyranoside binding site. Position 87–89 (87–89 (LAV)) interacts with acetyl-CoA. The 1D-myo-inositol 2-(L-cysteinylamino)-2-deoxy-alpha-D-glucopyranoside site is built by E187, K227, and E239. Residues 243–245 (LGV) and 250–256 (HGGGLGK) each bind acetyl-CoA. Y278 provides a ligand contact to 1D-myo-inositol 2-(L-cysteinylamino)-2-deoxy-alpha-D-glucopyranoside.

The protein belongs to the acetyltransferase family. MshD subfamily. In terms of assembly, monomer.

It carries out the reaction 1D-myo-inositol 2-(L-cysteinylamino)-2-deoxy-alpha-D-glucopyranoside + acetyl-CoA = mycothiol + CoA + H(+). In terms of biological role, catalyzes the transfer of acetyl from acetyl-CoA to desacetylmycothiol (Cys-GlcN-Ins) to form mycothiol. This is Mycothiol acetyltransferase from Salinispora arenicola (strain CNS-205).